A 259-amino-acid polypeptide reads, in one-letter code: NADP-dependent 3-hydroxy acid dehydrogenase (259 aa).

I11 contributes to the NADP(+) binding site. Position 42 is a phosphoserine (S42). Residue T43 is modified to Phosphothreonine. Residues D65, N92, R126, Y158, K162, and V191 each contribute to the NADP(+) site. Y158 serves as the catalytic Proton acceptor. K162 functions as the Lowers pKa of active site Tyr in the catalytic mechanism.

It belongs to the short-chain dehydrogenases/reductases (SDR) family. Homotetramer.

It is found in the cytoplasm. It localises to the nucleus. The catalysed reaction is L-allo-threonine + NADP(+) = aminoacetone + CO2 + NADPH. Functionally, NADP-dependent dehydrogenase with broad substrate specificity acting on 3-hydroxy acids. Catalyzes the NADP-dependent oxidation of L-allo-threonine to L-2-amino-3-keto-butyrate, which is spontaneously decarboxylated into aminoacetone. Also acts on D-threonine, L-serine, D-serine, D-3-hydroxyisobutyrate, L-3-hydroxyisobutyrate, D-glycerate and L-glycerate. This Schizosaccharomyces pombe (strain 972 / ATCC 24843) (Fission yeast) protein is NADP-dependent 3-hydroxy acid dehydrogenase.